We begin with the raw amino-acid sequence, 453 residues long: Adenylyltransferase and sulfurtransferase MOCS3 (453 aa).

Position 62 is a phosphothreonine (Thr62). ATP contacts are provided by residues Gly101, Asp122, 129-133, Lys146, and 190-191; these read SNFHR and DN. Zn(2+)-binding residues include Cys231 and Cys234. Catalysis depends on Cys248, which acts as the Glycyl thioester intermediate; for adenylyltransferase activity. The Zn(2+) site is built by Cys306 and Cys309. The region spanning 355–451 is the Rhodanese domain; that stretch reads QAQPHLLIDV…WTNSVDPSFP (97 aa). Cys410 acts as the Cysteine persulfide intermediate; for sulfurtransferase activity in catalysis.

In the N-terminal section; belongs to the HesA/MoeB/ThiF family. UBA4 subfamily. Requires Zn(2+) as cofactor.

The protein resides in the cytoplasm. It is found in the cytosol. The enzyme catalyses [molybdopterin-synthase sulfur-carrier protein]-C-terminal Gly-Gly + ATP + H(+) = [molybdopterin-synthase sulfur-carrier protein]-C-terminal Gly-Gly-AMP + diphosphate. It catalyses the reaction [molybdopterin-synthase sulfur-carrier protein]-C-terminal Gly-Gly-AMP + S-sulfanyl-L-cysteinyl-[cysteine desulfurase] + AH2 = [molybdopterin-synthase sulfur-carrier protein]-C-terminal-Gly-aminoethanethioate + L-cysteinyl-[cysteine desulfurase] + A + AMP + 2 H(+). It functions in the pathway tRNA modification; 5-methoxycarbonylmethyl-2-thiouridine-tRNA biosynthesis. Its pathway is cofactor biosynthesis; molybdopterin biosynthesis. Plays a central role in 2-thiolation of mcm(5)S(2)U at tRNA wobble positions of cytosolic tRNA(Lys), tRNA(Glu) and tRNA(Gln). Also essential during biosynthesis of the molybdenum cofactor. Acts by mediating the C-terminal thiocarboxylation of sulfur carriers URM1 and MOCS2A. Its N-terminus first activates URM1 and MOCS2A as acyl-adenylates (-COAMP), then the persulfide sulfur on the catalytic cysteine is transferred to URM1 and MOCS2A to form thiocarboxylation (-COSH) of their C-terminus. The reaction probably involves hydrogen sulfide that is generated from the persulfide intermediate and that acts as a nucleophile towards URM1 and MOCS2A. Subsequently, a transient disulfide bond is formed. Does not use thiosulfate as sulfur donor; NFS1 probably acting as a sulfur donor for thiocarboxylation reactions. The polypeptide is Adenylyltransferase and sulfurtransferase MOCS3 (Drosophila yakuba (Fruit fly)).